Consider the following 403-residue polypeptide: Phosphoglycerate kinase (403 aa).

Substrate contacts are provided by residues 21–23 (DFN), R36, 59–62 (HLGR), R119, and R159. Residues K214, G301, E332, and 359–362 (GGDS) contribute to the ATP site.

The protein belongs to the phosphoglycerate kinase family. In terms of assembly, monomer.

It localises to the cytoplasm. The enzyme catalyses (2R)-3-phosphoglycerate + ATP = (2R)-3-phospho-glyceroyl phosphate + ADP. It functions in the pathway carbohydrate degradation; glycolysis; pyruvate from D-glyceraldehyde 3-phosphate: step 2/5. The polypeptide is Phosphoglycerate kinase (Lactobacillus delbrueckii subsp. bulgaricus (strain ATCC 11842 / DSM 20081 / BCRC 10696 / JCM 1002 / NBRC 13953 / NCIMB 11778 / NCTC 12712 / WDCM 00102 / Lb 14)).